Consider the following 396-residue polypeptide: 8-amino-7-oxononanoate synthase (396 aa).

Arginine 19 is a binding site for substrate. 106-107 (GY) lines the pyridoxal 5'-phosphate pocket. Residue histidine 131 participates in substrate binding. 3 residues coordinate pyridoxal 5'-phosphate: serine 176, histidine 204, and threonine 233. Residue lysine 236 is modified to N6-(pyridoxal phosphate)lysine. Residue threonine 350 coordinates substrate.

The protein belongs to the class-II pyridoxal-phosphate-dependent aminotransferase family. BioF subfamily. As to quaternary structure, homodimer. Pyridoxal 5'-phosphate serves as cofactor.

It catalyses the reaction 6-carboxyhexanoyl-[ACP] + L-alanine + H(+) = (8S)-8-amino-7-oxononanoate + holo-[ACP] + CO2. It functions in the pathway cofactor biosynthesis; biotin biosynthesis. Catalyzes the decarboxylative condensation of pimeloyl-[acyl-carrier protein] and L-alanine to produce 8-amino-7-oxononanoate (AON), [acyl-carrier protein], and carbon dioxide. In Pseudomonas syringae pv. syringae (strain B728a), this protein is 8-amino-7-oxononanoate synthase.